A 626-amino-acid polypeptide reads, in one-letter code: Glyco-Gag protein (626 aa).

At L1–R66 the chain is on the cytoplasmic side. A helical membrane pass occupies residues L67 to S86. Topologically, residues E87–D626 are extracellular. N113 is a glycosylation site (N-linked (GlcNAc...) asparagine; by host). 2 stretches are compositionally biased toward pro residues: residues P198–T212 and D249–P261. Disordered stretches follow at residues P198–R306 and R522–D626. Composition is skewed to basic and acidic residues over residues R522–R554 and R574–K607. Residues E526–L566 adopt a coiled-coil conformation. A CCHC-type zinc finger spans residues D590–K607.

Post-translationally, glycosylated by host. In terms of processing, cleaved by host near the middle of the molecule, releasing the c-terminal half containing capsid and nucleoprotein domains op GAG.

It localises to the host cell membrane. In terms of biological role, plays a role in viral particle release. Presumably acts by facilitating the fission of the virion bud at the cell surface. May prevent the antiviral activity of murine APOBEC3. This is Glyco-Gag protein from Mus musculus (Mouse).